The chain runs to 160 residues: Putative 4-hydroxy-4-methyl-2-oxoglutarate aldolase (160 aa).

Substrate-binding positions include 75–78 (GDQL) and Arg97. Asp98 contacts a divalent metal cation.

It belongs to the class II aldolase/RraA-like family. As to quaternary structure, homotrimer. A divalent metal cation serves as cofactor.

The enzyme catalyses 4-hydroxy-4-methyl-2-oxoglutarate = 2 pyruvate. The catalysed reaction is oxaloacetate + H(+) = pyruvate + CO2. Functionally, catalyzes the aldol cleavage of 4-hydroxy-4-methyl-2-oxoglutarate (HMG) into 2 molecules of pyruvate. Also contains a secondary oxaloacetate (OAA) decarboxylase activity due to the common pyruvate enolate transition state formed following C-C bond cleavage in the retro-aldol and decarboxylation reactions. The chain is Putative 4-hydroxy-4-methyl-2-oxoglutarate aldolase from Vibrio parahaemolyticus serotype O3:K6 (strain RIMD 2210633).